Here is a 96-residue protein sequence, read N- to C-terminus: CLAVATA3/ESR (CLE)-related protein 43 (96 aa).

The first 28 residues, methionine 1–glycine 28, serve as a signal peptide directing secretion. Residues phenylalanine 71–asparagine 96 are disordered. The N-linked (GlcNAc...) asparagine glycan is linked to asparagine 74. Hydroxyproline is present on residues proline 88 and proline 91. O-linked (Ara...) hydroxyproline glycosylation is present at proline 91.

Belongs to the CLV3/ESR signal peptide family. Post-translationally, the O-glycosylation (arabinosylation) of the hydroxyproline Pro-91 enhances binding affinity of the CLE43p peptide for its receptor. In terms of tissue distribution, expressed at low levels in seedlings.

The protein localises to the secreted. It localises to the extracellular space. Its function is as follows. Extracellular signal peptide that regulates cell fate. Promotes pollen tube growth prolongation in a SKM1 and SKM2-dependent manner, especially under relatively high temperature (at 30 degrees Celsius), thus conferring tolerance against high temperature probably through the maintenance of mitochondrial activity. This is CLAVATA3/ESR (CLE)-related protein 43 from Arabidopsis thaliana (Mouse-ear cress).